A 513-amino-acid polypeptide reads, in one-letter code: 5-aminolevulinate synthase, erythroid-specific, mitochondrial (513 aa).

Residues 1-18 constitute a mitochondrion transit peptide; it reads MAAFLRCPLLARHPPLAR. Arg-98 serves as a coordination point for succinyl-CoA. The pyridoxal 5'-phosphate site is built by Cys-190 and Phe-191. The succinyl-CoA site is built by Ser-212 and Lys-231. Positions 264, 292, and 320 each coordinate pyridoxal 5'-phosphate. Lys-323 is an active-site residue. Lys-323 bears the N6-(pyridoxal phosphate)lysine mark. Pyridoxal 5'-phosphate contacts are provided by Thr-352 and Thr-353. Succinyl-CoA is bound at residue Thr-437.

It belongs to the class-II pyridoxal-phosphate-dependent aminotransferase family. Homodimer. Pyridoxal 5'-phosphate serves as cofactor. As to expression, erythroid-specific.

It is found in the mitochondrion inner membrane. The catalysed reaction is succinyl-CoA + glycine + H(+) = 5-aminolevulinate + CO2 + CoA. It functions in the pathway porphyrin-containing compound metabolism; protoporphyrin-IX biosynthesis; 5-aminolevulinate from glycine: step 1/1. Catalyzes the pyridoxal 5'-phosphate (PLP)-dependent condensation of succinyl-CoA and glycine to form aminolevulinic acid (ALA), with CoA and CO2 as by-products. Contributes significantly to heme formation during erythropoiesis. This chain is 5-aminolevulinate synthase, erythroid-specific, mitochondrial (ALAS2), found in Gallus gallus (Chicken).